We begin with the raw amino-acid sequence, 329 residues long: NADH-quinone oxidoreductase subunit H (329 aa).

9 helical membrane passes run 9–29 (LIKILILVAVFSALGGFATYI), 42–62 (GPCYVGPFGLLQVAADGIKLF), 75–95 (FIFTLAPIIAMVSAFVSMAPI), 117–137 (IGFLFFLAVGSAGIYAPILAG), 154–174 (IQLLSFEVVSTLTILAPLMVV), 188–208 (GGFLDWLVFKQPLAFVLFLIA), 238–258 (LKWGMFFLAEYAHLFAFSFVI), 269–291 (WGFIPGGIAILIKAGFFVFLSMW), and 309–329 (WKIMLPLALLNIVLTGIIILI).

Belongs to the complex I subunit 1 family. NDH-1 is composed of 14 different subunits. Subunits NuoA, H, J, K, L, M, N constitute the membrane sector of the complex.

The protein localises to the cell inner membrane. It carries out the reaction a quinone + NADH + 5 H(+)(in) = a quinol + NAD(+) + 4 H(+)(out). Its function is as follows. NDH-1 shuttles electrons from NADH, via FMN and iron-sulfur (Fe-S) centers, to quinones in the respiratory chain. The immediate electron acceptor for the enzyme in this species is believed to be ubiquinone. Couples the redox reaction to proton translocation (for every two electrons transferred, four hydrogen ions are translocated across the cytoplasmic membrane), and thus conserves the redox energy in a proton gradient. This subunit may bind ubiquinone. The sequence is that of NADH-quinone oxidoreductase subunit H from Helicobacter pylori (strain ATCC 700392 / 26695) (Campylobacter pylori).